Here is a 299-residue protein sequence, read N- to C-terminus: tRNA dimethylallyltransferase (299 aa).

11–18 contributes to the ATP binding site; the sequence is GPTAVGKT. 13 to 18 contacts substrate; the sequence is TAVGKT. The tract at residues 36-39 is interaction with substrate tRNA; that stretch reads DSQQ.

The protein belongs to the IPP transferase family. In terms of assembly, monomer. Mg(2+) serves as cofactor.

The enzyme catalyses adenosine(37) in tRNA + dimethylallyl diphosphate = N(6)-dimethylallyladenosine(37) in tRNA + diphosphate. Catalyzes the transfer of a dimethylallyl group onto the adenine at position 37 in tRNAs that read codons beginning with uridine, leading to the formation of N6-(dimethylallyl)adenosine (i(6)A). The polypeptide is tRNA dimethylallyltransferase (Streptococcus pyogenes serotype M49 (strain NZ131)).